The primary structure comprises 86 residues: RNA-binding protein Hfq (86 aa).

The region spanning 9 to 68 (DPYLNTLRKEKVPVSIYLVNGIKLQGQIESFDQFVVLLKNTVSQMVYKHAISTVVPARPV) is the Sm domain. Residues 66 to 86 (RPVRLPSPSDAEHGDSEPGNA) form a disordered region. Basic and acidic residues predominate over residues 75-86 (DAEHGDSEPGNA).

Belongs to the Hfq family. As to quaternary structure, homohexamer.

RNA chaperone that binds small regulatory RNA (sRNAs) and mRNAs to facilitate mRNA translational regulation in response to envelope stress, environmental stress and changes in metabolite concentrations. Also binds with high specificity to tRNAs. This Pseudomonas entomophila (strain L48) protein is RNA-binding protein Hfq.